Reading from the N-terminus, the 268-residue chain is Norsolorinic acid ketoreductase nor1 (268 aa).

Residues I32, D79, N108, Y182, K186, V213, and T215 each contribute to the NADP(+) site. Y182 serves as the catalytic Proton donor. Catalysis depends on K186, which acts as the Lowers pKa of active site Tyr.

It belongs to the short-chain dehydrogenases/reductases (SDR) family.

It is found in the cytoplasm. It localises to the cytosol. The protein resides in the vacuole. The enzyme catalyses (1'S)-averantin + NADP(+) = norsolorinic acid + NADPH + H(+). The protein operates within mycotoxin biosynthesis. Its function is as follows. Norsolorinic acid ketoreductase; part of the fragmented gene cluster that mediates the biosynthesis of dothistromin (DOTH), a polyketide toxin very similar in structure to the aflatoxin precursor, versicolorin B. The first step of the pathway is the conversion of acetate to norsolorinic acid (NOR) and requires the fatty acid synthase subunits hexA and hexB, as well as the polyketide synthase pksA. PksA combines a hexanoyl starter unit and 7 malonyl-CoA extender units to synthesize the precursor NOR. The hexanoyl starter unit is provided to the acyl-carrier protein (ACP) domain by the fungal fatty acid synthase hexA/hexB. The second step is the conversion of NOR to averantin (AVN) and requires the norsolorinic acid ketoreductase nor1, which catalyzes the dehydration of norsolorinic acid to form (1'S)-averantin. The cytochrome P450 monooxygenase avnA then catalyzes the hydroxylation of AVN to 5'hydroxyaverantin (HAVN). The next step is performed by adhA that transforms HAVN to averufin (AVF). Averufin might then be converted to hydroxyversicolorone by cypX and avfA. Hydroxyversicolorone is further converted versiconal hemiacetal acetate (VHA) by moxY. VHA is then the substrate for the versiconal hemiacetal acetate esterase est1 to yield versiconal (VAL). Versicolorin B synthase vbsA then converts VAL to versicolorin B (VERB) by closing the bisfuran ring. Then, the activity of the versicolorin B desaturase verB leads to versicolorin A (VERA). DotB, a predicted chloroperoxidase, may perform epoxidation of the A-ring of VERA. Alternatively, a cytochrome P450, such as cypX or avnA could catalyze this step. It is also possible that another, uncharacterized, cytochrome P450 enzyme is responsible for this step. Opening of the epoxide could potentially be achieved by the epoxide hydrolase epoA. However, epoA seems not to be required for DOTH biosynthesis, but other epoxide hydrolases may have the ability to complement this hydrolysis. Alternatively, opening of the epoxide ring could be achieved non-enzymatically. The next step is the deoxygenation of ring A to yield the 5,8-dihydroxyanthraquinone which is most likely catalyzed by the NADPH dehydrogenase encoded by ver1. The last stages of DOTH biosynthesis are proposed to involve hydroxylation of the bisfuran. OrdB and norB might have oxidative roles here. An alternative possibility is that cytochrome P450 monoogenases such as avnA and cypX might perform these steps in addition to previously proposed steps. The polypeptide is Norsolorinic acid ketoreductase nor1 (Dothistroma septosporum (strain NZE10 / CBS 128990) (Red band needle blight fungus)).